The sequence spans 262 residues: 5'-nucleotidase SurE (262 aa).

Positions 11, 12, 43, and 101 each coordinate a divalent metal cation.

It belongs to the SurE nucleotidase family. A divalent metal cation serves as cofactor.

The protein localises to the cytoplasm. It catalyses the reaction a ribonucleoside 5'-phosphate + H2O = a ribonucleoside + phosphate. Its function is as follows. Nucleotidase that shows phosphatase activity on nucleoside 5'-monophosphates. In Prochlorococcus marinus (strain NATL2A), this protein is 5'-nucleotidase SurE.